Reading from the N-terminus, the 541-residue chain is Chaperonin GroEL 1 (541 aa).

ATP is bound by residues 29 to 32 (TIGP), 86 to 90 (DGTTT), Gly-415, 479 to 481 (NAA), and Asp-495.

Belongs to the chaperonin (HSP60) family. As to quaternary structure, forms a cylinder of 14 subunits composed of two heptameric rings stacked back-to-back. Interacts with the co-chaperonin GroES.

The protein resides in the cytoplasm. It catalyses the reaction ATP + H2O + a folded polypeptide = ADP + phosphate + an unfolded polypeptide.. Together with its co-chaperonin GroES, plays an essential role in assisting protein folding. The GroEL-GroES system forms a nano-cage that allows encapsulation of the non-native substrate proteins and provides a physical environment optimized to promote and accelerate protein folding. In Streptomyces coelicolor (strain ATCC BAA-471 / A3(2) / M145), this protein is Chaperonin GroEL 1.